The following is a 232-amino-acid chain: Uracil phosphoribosyltransferase (232 aa).

Lys38–Arg42 provides a ligand contact to GTP. Residues Arg87, Arg112, and Asp140–Thr148 each bind 5-phospho-alpha-D-ribose 1-diphosphate. Uracil contacts are provided by residues Ile204 and Gly209 to Ala211. A 5-phospho-alpha-D-ribose 1-diphosphate-binding site is contributed by Asp210.

It belongs to the UPRTase family. It depends on Mg(2+) as a cofactor.

It catalyses the reaction UMP + diphosphate = 5-phospho-alpha-D-ribose 1-diphosphate + uracil. It functions in the pathway pyrimidine metabolism; UMP biosynthesis via salvage pathway; UMP from uracil: step 1/1. Allosterically activated by GTP. Functionally, catalyzes the conversion of uracil and 5-phospho-alpha-D-ribose 1-diphosphate (PRPP) to UMP and diphosphate. The chain is Uracil phosphoribosyltransferase from Methanococcus vannielii (strain ATCC 35089 / DSM 1224 / JCM 13029 / OCM 148 / SB).